The sequence spans 478 residues: Protein nucleotidyltransferase YdiU (478 aa).

ATP is bound by residues Gly74, Gly76, Arg77, Lys97, Asp109, Gly110, Arg160, and Arg167. Asp236 acts as the Proton acceptor in catalysis. Mg(2+)-binding residues include Asn237 and Asp246. Asp246 provides a ligand contact to ATP.

The protein belongs to the SELO family. Requires Mg(2+) as cofactor. Mn(2+) serves as cofactor.

It carries out the reaction L-seryl-[protein] + ATP = 3-O-(5'-adenylyl)-L-seryl-[protein] + diphosphate. The catalysed reaction is L-threonyl-[protein] + ATP = 3-O-(5'-adenylyl)-L-threonyl-[protein] + diphosphate. The enzyme catalyses L-tyrosyl-[protein] + ATP = O-(5'-adenylyl)-L-tyrosyl-[protein] + diphosphate. It catalyses the reaction L-histidyl-[protein] + UTP = N(tele)-(5'-uridylyl)-L-histidyl-[protein] + diphosphate. It carries out the reaction L-seryl-[protein] + UTP = O-(5'-uridylyl)-L-seryl-[protein] + diphosphate. The catalysed reaction is L-tyrosyl-[protein] + UTP = O-(5'-uridylyl)-L-tyrosyl-[protein] + diphosphate. In terms of biological role, nucleotidyltransferase involved in the post-translational modification of proteins. It can catalyze the addition of adenosine monophosphate (AMP) or uridine monophosphate (UMP) to a protein, resulting in modifications known as AMPylation and UMPylation. This chain is Protein nucleotidyltransferase YdiU, found in Chromobacterium violaceum (strain ATCC 12472 / DSM 30191 / JCM 1249 / CCUG 213 / NBRC 12614 / NCIMB 9131 / NCTC 9757 / MK).